The sequence spans 391 residues: Cyclin-A1 (391 aa).

Belongs to the cyclin family. Cyclin AB subfamily. In terms of assembly, interacts with the CDK1 and the CDK2 protein kinases to form a serine/threonine kinase holoenzyme complex. The cyclin subunit imparts substrate specificity to the complex.

The protein localises to the nucleus. Functionally, may be involved in the control of the cell cycle at the G1/S (start) and G2/M (mitosis) transitions. The protein is Cyclin-A1 (ccna1) of Carassius auratus (Goldfish).